We begin with the raw amino-acid sequence, 500 residues long: UDP-N-acetylmuramoyl-L-alanyl-D-glutamate--2,6-diaminopimelate ligase (500 aa).

UDP-N-acetyl-alpha-D-muramoyl-L-alanyl-D-glutamate contacts are provided by residues Leu26, Ser28, and 43–45 (HQV). 123–129 (GTNGKTT) provides a ligand contact to ATP. UDP-N-acetyl-alpha-D-muramoyl-L-alanyl-D-glutamate contacts are provided by residues Asn164, 165 to 166 (TT), Ser192, Gln198, and Arg200. Lys232 carries the post-translational modification N6-carboxylysine. Meso-2,6-diaminopimelate-binding positions include Arg399, 423–426 (DNPR), Gly474, and Glu478. Residues 423–426 (DNPR) carry the Meso-diaminopimelate recognition motif motif.

It belongs to the MurCDEF family. MurE subfamily. Mg(2+) serves as cofactor. Carboxylation is probably crucial for Mg(2+) binding and, consequently, for the gamma-phosphate positioning of ATP.

It localises to the cytoplasm. The catalysed reaction is UDP-N-acetyl-alpha-D-muramoyl-L-alanyl-D-glutamate + meso-2,6-diaminopimelate + ATP = UDP-N-acetyl-alpha-D-muramoyl-L-alanyl-gamma-D-glutamyl-meso-2,6-diaminopimelate + ADP + phosphate + H(+). It functions in the pathway cell wall biogenesis; peptidoglycan biosynthesis. In terms of biological role, catalyzes the addition of meso-diaminopimelic acid to the nucleotide precursor UDP-N-acetylmuramoyl-L-alanyl-D-glutamate (UMAG) in the biosynthesis of bacterial cell-wall peptidoglycan. The polypeptide is UDP-N-acetylmuramoyl-L-alanyl-D-glutamate--2,6-diaminopimelate ligase (Actinobacillus pleuropneumoniae serotype 5b (strain L20)).